Here is a 519-residue protein sequence, read N- to C-terminus: MAFLHFDNRFIRELPGDPLTLNQPRQVHAAFWSAVTPAPVPQPQLIASSAEVAALLGISLAELQQPAWVAALSGNGLLDGMSPFATCYGGHQFGNWAGQLGDGRAISLGELIHNDLRWELQLKGAGVTPYSRRGDGKAVLRSSIREFLCSEAMFHLGVPTTRALSLVLTGEQIWRDMFYDGNPQQEPGAIVCRVAPSFIRFGHFQLPAMRGESDLLNQLIDFTIDRDFPHLSAQPATVRRGVWFSEVCITTAKLMVEWTRVGFVHGVMNTDNMSILGLTIDYGPYGWVDNFDLNWTPNTTDAEGLRYCFGRQPAIARWNLERLAEALGTVMTDHAILAQGIEMFDETFAQEMAAMLAAKLGWQQWLPEDSELVNRLFDLLQQAEVDMTLFFRRLALVDVSAPDLTVLADAFYRDDLFCQHQPAFTQWLTNYSQRVLSEGVLPAERAARMNQVNPVYVLRNYLAQQVIDAAEQGNYQPIAELLEVLRQPYTEQSGKEAYAQKRPDWARHKPGCSMLSCSS.

ATP contacts are provided by G101, G103, R104, K123, D135, G136, R193, and R200. Residue D271 is the Proton acceptor of the active site. Residues N272 and D281 each contribute to the Mg(2+) site. D281 is an ATP binding site.

It belongs to the SELO family. Mg(2+) serves as cofactor. Requires Mn(2+) as cofactor.

It catalyses the reaction L-seryl-[protein] + ATP = 3-O-(5'-adenylyl)-L-seryl-[protein] + diphosphate. The catalysed reaction is L-threonyl-[protein] + ATP = 3-O-(5'-adenylyl)-L-threonyl-[protein] + diphosphate. The enzyme catalyses L-tyrosyl-[protein] + ATP = O-(5'-adenylyl)-L-tyrosyl-[protein] + diphosphate. It carries out the reaction L-histidyl-[protein] + UTP = N(tele)-(5'-uridylyl)-L-histidyl-[protein] + diphosphate. It catalyses the reaction L-seryl-[protein] + UTP = O-(5'-uridylyl)-L-seryl-[protein] + diphosphate. The catalysed reaction is L-tyrosyl-[protein] + UTP = O-(5'-uridylyl)-L-tyrosyl-[protein] + diphosphate. Nucleotidyltransferase involved in the post-translational modification of proteins. It can catalyze the addition of adenosine monophosphate (AMP) or uridine monophosphate (UMP) to a protein, resulting in modifications known as AMPylation and UMPylation. This chain is Protein nucleotidyltransferase YdiU, found in Tolumonas auensis (strain DSM 9187 / NBRC 110442 / TA 4).